A 241-amino-acid chain; its full sequence is uncharacterized protein (241 aa).

The protein belongs to the AB hydrolase superfamily. AB hydrolase 2 family.

This is an uncharacterized protein from Schizosaccharomyces pombe (strain 972 / ATCC 24843) (Fission yeast).